A 96-amino-acid polypeptide reads, in one-letter code: RING finger protein Z (96 aa).

Basic and acidic residues predominate over residues 1-10 (MGNCRSKQES). A disordered region spans residues 1-21 (MGNCRSKQESHPICPNTQTPE). Glycine 2 carries the N-myristoyl glycine; by host lipid modification. The RING-type; atypical zinc finger occupies 41-77 (CKCCWFADRNLINCSDHYLCLRCLNVMLRTSNLCNIC). The short motif at 91–94 (PTAP) is the PTAP/PSAP motif element.

It belongs to the arenaviridae Z protein family. As to quaternary structure, interacts with protein NP; this interaction probably directs the encapsidated genome to budding sites. Interacts (via RING domain) with polymerase L; this interaction inhibits viral transcription and replication, Z partially blocks the product exit tunnel for the releasing nascent RNA product. Interacts with the glycoprotein complex; this interaction plays a role in virion budding. Interacts with host eIF4E; this interaction results in eIF4E reduced affinity for its substrate, the 5'-m7 G cap structure. Interacts (via late-budding domain) with host TSG101; this interaction is essential for budding and release of viral particles. Interacts with host RPLP0; this interaction may serve to load ribosome-like particles inside the virion. Interacts with host PML; this interaction induces PML bodies redistribution in the cytoplasm upon viral infection. Myristoylation is required for the role of RING finger protein Z in assembly and budding.

The protein localises to the virion. It is found in the host cytoplasm. It localises to the host perinuclear region. The protein resides in the host cell membrane. Functionally, plays a crucial role in virion assembly and budding. Expressed late in the virus life cycle, it acts as an inhibitor of viral transcription and RNA synthesis by interacting with the viral polymerase L. Presumably recruits the NP encapsidated genome to cellular membranes at budding sites via direct interaction with NP. Plays critical roles in the final steps of viral release by interacting with host TSG101, a member of the vacuolar protein-sorting pathway and using other cellular host proteins involved in vesicle formation pathway. The budding of the virus progeny occurs after association of protein Z with the viral glycoprotein complex SSP-GP1-GP2 at the cell periphery, step that requires myristoylation of protein Z. Also selectively represses protein production by associating with host eIF4E. In cell-based minigenome assay, has an inhibitory effect on the ribonucleoprotein machinery (vRNP), which is responsible for the replication and transcription of the viral genome. The protein is RING finger protein Z of Hylaeamys megacephalus (Large-headed rice rat).